The following is a 225-amino-acid chain: Cytidylate kinase (225 aa).

Residue Gly-11–Thr-19 participates in ATP binding.

The protein belongs to the cytidylate kinase family. Type 1 subfamily.

The protein resides in the cytoplasm. The catalysed reaction is CMP + ATP = CDP + ADP. It carries out the reaction dCMP + ATP = dCDP + ADP. This is Cytidylate kinase from Bacillus pumilus (strain SAFR-032).